The sequence spans 790 residues: Cadherin-20 (790 aa).

Residues 1 to 25 form the signal peptide; sequence MSCKRSYHRHCALVYYMVLLDLTNA. Positions 26–52 are excised as a propeptide; that stretch reads VFEFSHPLIRDSGNSQSRQLLHHRLKR. Residues 26 to 612 lie on the Extracellular side of the membrane; that stretch reads VFEFSHPLIR…PYTLPISLSR (587 aa). Cadherin domains lie at 54–158, 159–267, 268–382, 383–487, and 487–605; these read WVWN…EPKF, LDGP…PPRF, PQKH…PPVF, GSSF…APTF, and FTKF…EPYT. Residues N254, N283, N413, N454, and N535 are each glycosylated (N-linked (GlcNAc...) asparagine). The chain crosses the membrane as a helical span at residues 613–633; it reads GALIAILTCIFVLLVLVLLIL. Topologically, residues 634–790 are cytoplasmic; sequence SMRRHRKQPY…YGTKDNNGSL (157 aa).

Detected in embryonic posterior neural plate, embryonic neural tube, sulcus limitans and embryonic kidney.

It is found in the cell membrane. Functionally, cadherins are calcium-dependent cell adhesion proteins. They preferentially interact with themselves in a homophilic manner in connecting cells; cadherins may thus contribute to the sorting of heterogeneous cell types. The protein is Cadherin-20 (cdh20) of Xenopus laevis (African clawed frog).